The following is a 232-amino-acid chain: MLTFLAIITVAYLIGSIPTSIIAGRMLKGIDIREFGSGNAGGTNAFRVLGWKAGLAVTLIDIAKGTIAAVPVVAFFKAHPLGAFPDMNEIALNLIAGMSAVIGHVFTVFAGFKGGKGVSTAAGMLIGIAPISMLMVIGVFILAITLTRYVSVGSILAAIAFPLIIAIRKYLFDLGTGLDYHFFGKWLVHDSLDYHLLIFGGIVAAAIIYTHRANIKRLFSGTENRLTFGRRS.

Helical transmembrane passes span 4-24 (FLAIITVAYLIGSIPTSIIAG), 56-76 (AVTLIDIAKGTIAAVPVVAFF), 90-110 (IALNLIAGMSAVIGHVFTVFA), 124-144 (MLIGIAPISMLMVIGVFILAI), 147-167 (TRYVSVGSILAAIAFPLIIAI), and 191-211 (SLDYHLLIFGGIVAAAIIYTH).

The protein belongs to the PlsY family. As to quaternary structure, probably interacts with PlsX.

It is found in the cell inner membrane. It carries out the reaction an acyl phosphate + sn-glycerol 3-phosphate = a 1-acyl-sn-glycero-3-phosphate + phosphate. It participates in lipid metabolism; phospholipid metabolism. Its function is as follows. Catalyzes the transfer of an acyl group from acyl-phosphate (acyl-PO(4)) to glycerol-3-phosphate (G3P) to form lysophosphatidic acid (LPA). This enzyme utilizes acyl-phosphate as fatty acyl donor, but not acyl-CoA or acyl-ACP. The protein is Glycerol-3-phosphate acyltransferase of Chlorobaculum parvum (strain DSM 263 / NCIMB 8327) (Chlorobium vibrioforme subsp. thiosulfatophilum).